The chain runs to 165 residues: Ribosome maturation factor RimM (165 aa).

The region spanning 94–165 (EDEFYIADLT…YVILNYQREA (72 aa)) is the PRC barrel domain.

It belongs to the RimM family. As to quaternary structure, binds ribosomal protein uS19.

The protein localises to the cytoplasm. In terms of biological role, an accessory protein needed during the final step in the assembly of 30S ribosomal subunit, possibly for assembly of the head region. Essential for efficient processing of 16S rRNA. May be needed both before and after RbfA during the maturation of 16S rRNA. It has affinity for free ribosomal 30S subunits but not for 70S ribosomes. This is Ribosome maturation factor RimM from Rickettsia rickettsii (strain Sheila Smith).